The chain runs to 429 residues: Dihydroorotase (429 aa).

Zn(2+) is bound by residues H62 and H64. Substrate contacts are provided by residues 64–66 (HFR) and N96. The Zn(2+) site is built by D154, H181, and H234. Substrate is bound at residue N280. D307 provides a ligand contact to Zn(2+). D307 is an active-site residue. Residues H311 and 325 to 326 (FG) contribute to the substrate site.

The protein belongs to the metallo-dependent hydrolases superfamily. DHOase family. Class I DHOase subfamily. The cofactor is Zn(2+).

It carries out the reaction (S)-dihydroorotate + H2O = N-carbamoyl-L-aspartate + H(+). It participates in pyrimidine metabolism; UMP biosynthesis via de novo pathway; (S)-dihydroorotate from bicarbonate: step 3/3. Catalyzes the reversible cyclization of carbamoyl aspartate to dihydroorotate. The protein is Dihydroorotase of Latilactobacillus sakei subsp. sakei (strain 23K) (Lactobacillus sakei subsp. sakei).